Here is a 369-residue protein sequence, read N- to C-terminus: 3-isopropylmalate dehydrogenase (369 aa).

Substrate is bound by residues Arg-98, Arg-108, Arg-136, and Asp-227. Residues Asp-227, Asp-251, and Asp-255 each contribute to the Mg(2+) site. 290–302 lines the NAD(+) pocket; the sequence is GSAPDIAGKGIAN.

This sequence belongs to the isocitrate and isopropylmalate dehydrogenases family. LeuB type 1 subfamily. Homodimer. Requires Mg(2+) as cofactor. It depends on Mn(2+) as a cofactor.

The protein resides in the cytoplasm. It carries out the reaction (2R,3S)-3-isopropylmalate + NAD(+) = 4-methyl-2-oxopentanoate + CO2 + NADH. It participates in amino-acid biosynthesis; L-leucine biosynthesis; L-leucine from 3-methyl-2-oxobutanoate: step 3/4. In terms of biological role, catalyzes the oxidation of 3-carboxy-2-hydroxy-4-methylpentanoate (3-isopropylmalate) to 3-carboxy-4-methyl-2-oxopentanoate. The product decarboxylates to 4-methyl-2 oxopentanoate. This is 3-isopropylmalate dehydrogenase from Gluconobacter oxydans (strain 621H) (Gluconobacter suboxydans).